Reading from the N-terminus, the 698-residue chain is ATP-dependent RNA helicase DHX33 (698 aa).

Disordered regions lie at residues 1–20 and 29–50; these read MPEEASLPPAKRFRPGSCPP and TAGGGGGAGGGRRQTPPLAQPS. The interval 1 to 71 is required for nucleolar location; sequence MPEEASLPPA…RRSLPIFRAR (71 aa). Residues 30 to 40 are compositionally biased toward gly residues; that stretch reads AGGGGGAGGGR. Residues 75-243 enclose the Helicase ATP-binding domain; the sequence is LAQLRNLDNA…FNRAPVLYLE (169 aa). 88 to 95 is a binding site for ATP; that stretch reads GETGSGKT. Residues 185 to 188 carry the DEAH box motif; sequence DEAH. The region spanning 271 to 441 is the Helicase C-terminal domain; sequence QIHQEAPASQ…SVILQLLAMK (171 aa). Positions 462-553 are HA2; required for interaction with EIF3G and RPL26; sequence AIAQLDLLGA…ISSEGDHITL (92 aa). Positions 536–550 match the Critical for rDNA-binding motif; it reads VQSVRKKFISSEGDH.

It belongs to the DEAD box helicase family. DEAH subfamily. As to quaternary structure, interacts with UBTF. Interacts with DDX3X, EIF3G and EIF3H; the interaction is independent of RNA. Interacts (via HA2 region and Helicase C-terminal domain) with the components of the large ribosomal subunit RPL3, RPL7, RPL26 and RPL27. Binds to mRNA. Interacts (via the helicase C-terminal domain) with MAVS. Binds to double-stranded RNA (via the helicase C-terminal domain). Ubiquitinated, leading to its degradation by the proteasome. Deubiquitinated by USP36.

Its subcellular location is the nucleus. The protein localises to the nucleolus. It is found in the nucleoplasm. The protein resides in the cytoplasm. It localises to the inflammasome. It catalyses the reaction ATP + H2O = ADP + phosphate + H(+). Functionally, implicated in nucleolar organization, ribosome biogenesis, protein synthesis and cytoplasmic dsRNA sensing. Stimulates RNA polymerase I transcription of the 47S precursor rRNA. Associates with ribosomal DNA (rDNA) loci where it is involved in POLR1A recruitment. In the cytoplasm, promotes elongation-competent 80S ribosome assembly at the late stage of mRNA translation initiation. Senses cytosolic dsRNA mediating NLRP3 inflammasome formation in macrophages and type I interferon production in myeloid dendritic cells. Required for NLRP3 activation induced by viral dsRNA and bacterial RNA. In dendritic cells, required for induction of type I interferon production induced by cytoplasmic dsRNA via the activation of MAPK and NF-kappa-B signaling pathways. This Mus musculus (Mouse) protein is ATP-dependent RNA helicase DHX33.